Here is a 211-residue protein sequence, read N- to C-terminus: Large ribosomal subunit protein uL3 (211 aa).

The interval 126–147 is disordered; it reads HGQSRGPMAHGSRYHRRPGSMG.

Belongs to the universal ribosomal protein uL3 family. In terms of assembly, part of the 50S ribosomal subunit. Forms a cluster with proteins L14 and L19.

Functionally, one of the primary rRNA binding proteins, it binds directly near the 3'-end of the 23S rRNA, where it nucleates assembly of the 50S subunit. The chain is Large ribosomal subunit protein uL3 from Geobacillus thermodenitrificans (strain NG80-2).